We begin with the raw amino-acid sequence, 1327 residues long: ABC transporter 1 (1327 aa).

6 consecutive transmembrane segments (helical) span residues 47-67, 100-120, 170-190, 195-215, 228-248, and 276-296; these read LGIL…IIFG, VYVG…WNLF, KVGI…IAFV, LGGE…VGGY, VAGA…VHAF, and VAVQ…LAFW. The ABC transmembrane type-1 1 domain maps to 47–326; that stretch reads LGILAAIASG…TTYTVIFLLV (280 aa). Residues asparagine 381, asparagine 390, and asparagine 406 are each glycosylated (N-linked (GlcNAc...) asparagine). The 278-residue stretch at 386 to 663 folds into the ABC transporter 1 domain; sequence IELNNVSFAF…DGAYAGLVRL (278 aa). 421-428 lines the ATP pocket; the sequence is GLSGSGKS. N-linked (GlcNAc...) asparagine glycans are attached at residues asparagine 463 and asparagine 674. A run of 6 helical transmembrane segments spans residues 743-763, 785-805, 859-881, 888-910, 971-991, and 1005-1025; these read FLAL…AVVF, FYGL…LGSW, LTGS…IALS, IALV…VITM, LWLA…YWWG, and FFIV…MFTL. The ABC transmembrane type-1 2 domain occupies 743–1031; that stretch reads FLALTSAFVV…MFTLAPDVSR (289 aa). N-linked (GlcNAc...) asparagine glycosylation is present at asparagine 1050. A disordered region spans residues 1054–1081; the sequence is PCQHLKPGNDLEANAEPREKRPDQSQGG. Residues 1084-1323 enclose the ABC transporter 2 domain; the sequence is VSLNNVKFSY…SESYKINALH (240 aa). 1119 to 1126 lines the ATP pocket; the sequence is GPSGAGKS.

This sequence belongs to the ABC transporter superfamily. ABCB family. Multidrug resistance exporter (TC 3.A.1.201) subfamily.

Its subcellular location is the membrane. ABC transporter; part of the gene cluster that mediates the biosynthesis of hydroxamate-containing siderophores that play a critical role in virulence via intracellular iron acquisition during macrophage infection. Probably involved in the excretion of the extracellular siderophores. In Ajellomyces capsulatus (Darling's disease fungus), this protein is ABC transporter 1.